A 486-amino-acid chain; its full sequence is Carboxypeptidase Y homolog ARB_07161 (486 aa).

A signal peptide spans 1–17; that stretch reads MKGLLSLLLVGAANALA. N-linked (GlcNAc...) asparagine glycosylation is present at asparagine 111. Residue serine 241 is part of the active site. Cystine bridges form between cysteine 281–cysteine 305, cysteine 288–cysteine 298, and cysteine 327–cysteine 334. Aspartate 403 is an active-site residue. Cysteine 406 contacts substrate. Residue asparagine 430 is glycosylated (N-linked (GlcNAc...) asparagine). Histidine 462 is a catalytic residue.

The protein belongs to the peptidase S10 family.

It localises to the secreted. The enzyme catalyses Release of a C-terminal amino acid with broad specificity.. Involved in degradation of small peptides. The sequence is that of Carboxypeptidase Y homolog ARB_07161 from Arthroderma benhamiae (strain ATCC MYA-4681 / CBS 112371) (Trichophyton mentagrophytes).